The primary structure comprises 316 residues: Aspartate carbamoyltransferase catalytic subunit (316 aa).

Carbamoyl phosphate contacts are provided by Arg58 and Thr59. Residue Lys86 participates in L-aspartate binding. Positions 108, 136, and 139 each coordinate carbamoyl phosphate. Residues Arg169 and Arg223 each coordinate L-aspartate. The carbamoyl phosphate site is built by Gly264 and Pro265.

Belongs to the aspartate/ornithine carbamoyltransferase superfamily. ATCase family. As to quaternary structure, heterododecamer (2C3:3R2) of six catalytic PyrB chains organized as two trimers (C3), and six regulatory PyrI chains organized as three dimers (R2).

It carries out the reaction carbamoyl phosphate + L-aspartate = N-carbamoyl-L-aspartate + phosphate + H(+). The protein operates within pyrimidine metabolism; UMP biosynthesis via de novo pathway; (S)-dihydroorotate from bicarbonate: step 2/3. Functionally, catalyzes the condensation of carbamoyl phosphate and aspartate to form carbamoyl aspartate and inorganic phosphate, the committed step in the de novo pyrimidine nucleotide biosynthesis pathway. The protein is Aspartate carbamoyltransferase catalytic subunit of Granulibacter bethesdensis (strain ATCC BAA-1260 / CGDNIH1).